We begin with the raw amino-acid sequence, 179 residues long: Methylated-DNA--protein-cysteine methyltransferase, inducible (179 aa).

The Nucleophile; methyl group acceptor role is filled by Cys141.

Belongs to the MGMT family.

It carries out the reaction a 6-O-methyl-2'-deoxyguanosine in DNA + L-cysteinyl-[protein] = S-methyl-L-cysteinyl-[protein] + a 2'-deoxyguanosine in DNA. It catalyses the reaction a 4-O-methyl-thymidine in DNA + L-cysteinyl-[protein] = a thymidine in DNA + S-methyl-L-cysteinyl-[protein]. Involved in the cellular defense against the biological effects of O6-methylguanine (O6-MeG) and O4-methylthymine (O4-MeT) in DNA. Repairs the methylated nucleobase in DNA by stoichiometrically transferring the methyl group to a cysteine residue in the enzyme. This is a suicide reaction: the enzyme is irreversibly inactivated. The protein is Methylated-DNA--protein-cysteine methyltransferase, inducible (adaB) of Bacillus subtilis (strain 168).